Consider the following 556-residue polypeptide: 2-succinyl-5-enolpyruvyl-6-hydroxy-3-cyclohexene-1-carboxylate synthase (556 aa).

Belongs to the TPP enzyme family. MenD subfamily. In terms of assembly, homodimer. It depends on Mg(2+) as a cofactor. Requires Mn(2+) as cofactor. The cofactor is thiamine diphosphate.

The catalysed reaction is isochorismate + 2-oxoglutarate + H(+) = 5-enolpyruvoyl-6-hydroxy-2-succinyl-cyclohex-3-ene-1-carboxylate + CO2. Its pathway is quinol/quinone metabolism; 1,4-dihydroxy-2-naphthoate biosynthesis; 1,4-dihydroxy-2-naphthoate from chorismate: step 2/7. The protein operates within quinol/quinone metabolism; menaquinone biosynthesis. In terms of biological role, catalyzes the thiamine diphosphate-dependent decarboxylation of 2-oxoglutarate and the subsequent addition of the resulting succinic semialdehyde-thiamine pyrophosphate anion to isochorismate to yield 2-succinyl-5-enolpyruvyl-6-hydroxy-3-cyclohexene-1-carboxylate (SEPHCHC). The protein is 2-succinyl-5-enolpyruvyl-6-hydroxy-3-cyclohexene-1-carboxylate synthase of Escherichia coli O7:K1 (strain IAI39 / ExPEC).